The primary structure comprises 84 residues: Delta-thalatoxin-Cad1a (84 aa).

The first 19 residues, Met1 to Ala19, serve as a signal peptide directing secretion. A propeptide spanning residues Met20–Ala33 is cleaved from the precursor. 3 cysteine pairs are disulfide-bonded: Cys38–Cys78, Cys40–Cys68, and Cys61–Cys79.

It belongs to the sea anemone sodium channel inhibitory toxin family. Type II subfamily.

Its subcellular location is the secreted. It localises to the nematocyst. Its function is as follows. Binds specifically to the voltage-gated sodium channel (Nav) and delays its inactivation. This Cryptodendrum adhaesivum (Adhesive sea anemone) protein is Delta-thalatoxin-Cad1a.